Reading from the N-terminus, the 267-residue chain is Undecaprenyl-diphosphatase (267 aa).

7 consecutive transmembrane segments (helical) span residues 7–29 (LILG…HMIL), 41–61 (FWKS…IFVF), 69–89 (LDIW…GLFV), 96–116 (LFNG…FILI), 173–193 (AAEF…AYSI), 207–227 (IPLG…IKFF), and 239–259 (FGIY…SGIL).

This sequence belongs to the UppP family.

It localises to the cell inner membrane. The catalysed reaction is di-trans,octa-cis-undecaprenyl diphosphate + H2O = di-trans,octa-cis-undecaprenyl phosphate + phosphate + H(+). Its function is as follows. Catalyzes the dephosphorylation of undecaprenyl diphosphate (UPP). Confers resistance to bacitracin. The protein is Undecaprenyl-diphosphatase of Campylobacter jejuni subsp. jejuni serotype O:6 (strain 81116 / NCTC 11828).